A 564-amino-acid chain; its full sequence is Proline--tRNA ligase 1 (564 aa).

The protein belongs to the class-II aminoacyl-tRNA synthetase family. ProS type 1 subfamily. As to quaternary structure, homodimer.

The protein localises to the cytoplasm. The catalysed reaction is tRNA(Pro) + L-proline + ATP = L-prolyl-tRNA(Pro) + AMP + diphosphate. Its function is as follows. Catalyzes the attachment of proline to tRNA(Pro) in a two-step reaction: proline is first activated by ATP to form Pro-AMP and then transferred to the acceptor end of tRNA(Pro). As ProRS can inadvertently accommodate and process non-cognate amino acids such as alanine and cysteine, to avoid such errors it has two additional distinct editing activities against alanine. One activity is designated as 'pretransfer' editing and involves the tRNA(Pro)-independent hydrolysis of activated Ala-AMP. The other activity is designated 'posttransfer' editing and involves deacylation of mischarged Ala-tRNA(Pro). The misacylated Cys-tRNA(Pro) is not edited by ProRS. The chain is Proline--tRNA ligase 1 from Streptomyces avermitilis (strain ATCC 31267 / DSM 46492 / JCM 5070 / NBRC 14893 / NCIMB 12804 / NRRL 8165 / MA-4680).